The chain runs to 339 residues: Ketol-acid reductoisomerase (NADP(+)) (339 aa).

A KARI N-terminal Rossmann domain is found at Met-1 to Thr-182. Residues Tyr-24–Gln-27, Arg-48, Ser-51, and Asp-83–Gln-86 each bind NADP(+). Residue His-108 is part of the active site. Gly-134 is a binding site for NADP(+). One can recognise a KARI C-terminal knotted domain in the interval Ser-183–Ile-328. The Mg(2+) site is built by Asp-191, Glu-195, Glu-227, and Glu-231. Residue Ser-252 coordinates substrate.

Belongs to the ketol-acid reductoisomerase family. Mg(2+) is required as a cofactor.

It catalyses the reaction (2R)-2,3-dihydroxy-3-methylbutanoate + NADP(+) = (2S)-2-acetolactate + NADPH + H(+). The catalysed reaction is (2R,3R)-2,3-dihydroxy-3-methylpentanoate + NADP(+) = (S)-2-ethyl-2-hydroxy-3-oxobutanoate + NADPH + H(+). Its pathway is amino-acid biosynthesis; L-isoleucine biosynthesis; L-isoleucine from 2-oxobutanoate: step 2/4. It participates in amino-acid biosynthesis; L-valine biosynthesis; L-valine from pyruvate: step 2/4. In terms of biological role, involved in the biosynthesis of branched-chain amino acids (BCAA). Catalyzes an alkyl-migration followed by a ketol-acid reduction of (S)-2-acetolactate (S2AL) to yield (R)-2,3-dihydroxy-isovalerate. In the isomerase reaction, S2AL is rearranged via a Mg-dependent methyl migration to produce 3-hydroxy-3-methyl-2-ketobutyrate (HMKB). In the reductase reaction, this 2-ketoacid undergoes a metal-dependent reduction by NADPH to yield (R)-2,3-dihydroxy-isovalerate. The sequence is that of Ketol-acid reductoisomerase (NADP(+)) from Gluconacetobacter diazotrophicus (strain ATCC 49037 / DSM 5601 / CCUG 37298 / CIP 103539 / LMG 7603 / PAl5).